The chain runs to 191 residues: uncharacterized protein (191 aa).

One can recognise an HTH tetR-type domain in the interval 3 to 63; sequence IDRKKLILEA…EIFTTLLKEM (61 aa). The segment at residues 26–45 is a DNA-binding region (H-T-H motif); the sequence is TMDLVAKLANVGKGTIYTFF.

This is an uncharacterized protein from Bacillus subtilis (strain 168).